Reading from the N-terminus, the 726-residue chain is Probable pre-mRNA-splicing factor ATP-dependent RNA helicase DEAH2 (726 aa).

The 170-residue stretch at 71-240 (LKTLNNNQTL…FSGAPLMKVP (170 aa)) folds into the Helicase ATP-binding domain. Residue 84–91 (GETGSGKT) coordinates ATP. Positions 187–190 (DEAH) match the DEAH box motif. The Helicase C-terminal domain maps to 265–445 (TVVQIHMCEP…NTVLTLKKLG (181 aa)).

This sequence belongs to the DEAD box helicase family. DEAH subfamily. PRP43 sub-subfamily.

It carries out the reaction ATP + H2O = ADP + phosphate + H(+). In terms of biological role, may be involved in pre-mRNA splicing. In Arabidopsis thaliana (Mouse-ear cress), this protein is Probable pre-mRNA-splicing factor ATP-dependent RNA helicase DEAH2.